The chain runs to 244 residues: Ribonuclease 3 2 (244 aa).

In terms of domain architecture, RNase III spans 11–136 (LKALLRRLGL…LLGALYLSVG (126 aa)). Glutamate 50 lines the Mg(2+) pocket. Residue aspartate 54 is part of the active site. Positions 122 and 125 each coordinate Mg(2+). Residue glutamate 125 is part of the active site. The DRBM domain maps to 164 to 234 (NYKEALQAWT…AQQAYQDFIA (71 aa)).

It belongs to the ribonuclease III family. As to quaternary structure, homodimer. Requires Mg(2+) as cofactor.

It localises to the cytoplasm. It catalyses the reaction Endonucleolytic cleavage to 5'-phosphomonoester.. Digests double-stranded RNA. Involved in the processing of primary rRNA transcript to yield the immediate precursors to the large and small rRNAs (23S and 16S). Processes some mRNAs, and tRNAs when they are encoded in the rRNA operon. Processes pre-crRNA and tracrRNA of type II CRISPR loci if present in the organism. This chain is Ribonuclease 3 2, found in Synechocystis sp. (strain ATCC 27184 / PCC 6803 / Kazusa).